The chain runs to 414 residues: Histidine--tRNA ligase (414 aa).

This sequence belongs to the class-II aminoacyl-tRNA synthetase family. As to quaternary structure, homodimer.

It is found in the cytoplasm. The catalysed reaction is tRNA(His) + L-histidine + ATP = L-histidyl-tRNA(His) + AMP + diphosphate + H(+). The chain is Histidine--tRNA ligase from Ehrlichia ruminantium (strain Gardel).